The primary structure comprises 219 residues: N-(5'-phosphoribosyl)anthranilate isomerase (219 aa).

This sequence belongs to the TrpF family.

The enzyme catalyses N-(5-phospho-beta-D-ribosyl)anthranilate = 1-(2-carboxyphenylamino)-1-deoxy-D-ribulose 5-phosphate. It functions in the pathway amino-acid biosynthesis; L-tryptophan biosynthesis; L-tryptophan from chorismate: step 3/5. This Mesorhizobium japonicum (strain LMG 29417 / CECT 9101 / MAFF 303099) (Mesorhizobium loti (strain MAFF 303099)) protein is N-(5'-phosphoribosyl)anthranilate isomerase.